Reading from the N-terminus, the 290-residue chain is MNPIHLDTLLTIIDEGSFENASLALSISPSAVSQRIKALEKSVGRVLVSRTQPAVATEAGEVLVQAARKMALLQAETREQLAERLDEIPLTVAINADSLSTWFPPVFAEVAHWGAVTLTLRVEDEAHTLSLLRRGSVLGAVTREADPVAGCEVLRLGVMRHLPVATPELRARYTVDGQPDWVRMPVLRFGPNDVLQDRDLEGRVDGAVARRRVSVVPSAEGFGEAVRLGLGWGLLPEAQAAPMLAAGDVVQLDEKVVDTPLYWQRWRLESRLLARLTDAVVDAARAGLRT.

An HTH lysR-type domain is found at 1-57 (MNPIHLDTLLTIIDEGSFENASLALSISPSAVSQRIKALEKSVGRVLVSRTQPAVAT). The segment at residues 18–37 (FENASLALSISPSAVSQRIK) is a DNA-binding region (H-T-H motif).

Belongs to the LysR transcriptional regulatory family.

In terms of biological role, positively regulates the expression of the exporter LysE. This Corynebacterium efficiens (strain DSM 44549 / YS-314 / AJ 12310 / JCM 11189 / NBRC 100395) protein is Lysine export transcriptional regulatory protein LysG (lysG).